The primary structure comprises 320 residues: o-succinylbenzoate synthase (320 aa).

Catalysis depends on lysine 133, which acts as the Proton donor. Mg(2+)-binding residues include aspartate 161, glutamate 190, and aspartate 213. Lysine 235 acts as the Proton acceptor in catalysis.

The protein belongs to the mandelate racemase/muconate lactonizing enzyme family. MenC type 1 subfamily. A divalent metal cation serves as cofactor.

It catalyses the reaction (1R,6R)-6-hydroxy-2-succinyl-cyclohexa-2,4-diene-1-carboxylate = 2-succinylbenzoate + H2O. The protein operates within quinol/quinone metabolism; 1,4-dihydroxy-2-naphthoate biosynthesis; 1,4-dihydroxy-2-naphthoate from chorismate: step 4/7. Its pathway is quinol/quinone metabolism; menaquinone biosynthesis. In terms of biological role, converts 2-succinyl-6-hydroxy-2,4-cyclohexadiene-1-carboxylate (SHCHC) to 2-succinylbenzoate (OSB). The sequence is that of o-succinylbenzoate synthase from Shigella sonnei (strain Ss046).